The following is a 158-amino-acid chain: Small ribosomal subunit protein uS9 (158 aa).

This sequence belongs to the universal ribosomal protein uS9 family.

The polypeptide is Small ribosomal subunit protein uS9 (Brucella melitensis biotype 2 (strain ATCC 23457)).